A 116-amino-acid chain; its full sequence is MTDKKVTRLRRARKARLKMHELEAVRLCVYRSSQHIYAQVISADGSKVLASASTLDKALRDGATGNVDAAKKVGQLVAERAKAAGVTQVAFDRSGFKYHGRVKALADAAREGGLEF.

The protein belongs to the universal ribosomal protein uL18 family. As to quaternary structure, part of the 50S ribosomal subunit; part of the 5S rRNA/L5/L18/L25 subcomplex. Contacts the 5S and 23S rRNAs.

This is one of the proteins that bind and probably mediate the attachment of the 5S RNA into the large ribosomal subunit, where it forms part of the central protuberance. The sequence is that of Large ribosomal subunit protein uL18 from Ectopseudomonas mendocina (strain ymp) (Pseudomonas mendocina).